The primary structure comprises 513 residues: Flavonoid 3',5'-hydroxylase (513 aa).

Residue C446 coordinates heme.

This sequence belongs to the cytochrome P450 family. The cofactor is heme. Hypocotyl tissues.

It catalyses the reaction a 3',5'-unsubstituted flavanone + 2 reduced [NADPH--hemoprotein reductase] + 2 O2 = a 3',5'-dihydroxyflavanone + 2 oxidized [NADPH--hemoprotein reductase] + 2 H2O + 2 H(+). The protein operates within pigment biosynthesis; anthocyanin biosynthesis. Catalyzes the 3'5'-hydroxylation of naringenin and eriodictyol to form 5,7,3,'4',5'-pentahydroxyflavanone and 3',5'-hydroxylation of dihydrokaempferol and dihydroquercetin to form dihydromyricetin. The protein is Flavonoid 3',5'-hydroxylase (CYP75A2) of Solanum melongena (Eggplant).